The primary structure comprises 549 residues: Polycomb group RING finger protein 3 homolog mig-32 (549 aa).

Residues 1–263 are disordered; the sequence is MTRKRPALAE…EESMRQKYGQ (263 aa). Residues 12–29 are compositionally biased toward low complexity; sequence VSSSRSRVTRRSTTGAPS. Acidic residues-rich tracts occupy residues 38–49 and 87–100; these read PESDADSEDDYD and MDDD…DGEV. A compositionally biased stretch (basic residues) spans 118–130; that stretch reads KTAKLQTKKKKKK. The segment covering 134–144 has biased composition (pro residues); the sequence is PETPPTSPSPS. Positions 145–156 are enriched in low complexity; that stretch reads PSRSVSPSTTKS. Basic and acidic residues predominate over residues 205-235; it reads EEIKLRERAERKARRIEEAKNRPKLTIEQKL. A coiled-coil region spans residues 206–260; that stretch reads EIKLRERAERKARRIEEAKNRPKLTIEQKLAKLRKKKERRERRKEQEKEESMRQK. The span at 236 to 247 shows a compositional bias: basic residues; sequence AKLRKKKERRER. Residues 248 to 258 show a composition bias toward basic and acidic residues; it reads RKEQEKEESMR. The segment at 329–368 adopts an RING-type zinc-finger fold; it reads CGICDGYIVDATTIIDCMHTFCKSCLLTYFESDNNTCPTC.

As to quaternary structure, component of a PRC1-like complex.

It localises to the nucleus. The protein localises to the nucleolus. In terms of biological role, component of a Polycomb group (PcG) multiprotein PRC1-like complex, a complex class required to maintain the transcriptionally repressive state of many genes, throughout development. Required for ubiquitination of histone H2A. Plays a role in the formation of the male-specific genital sensilla (simple sense organs) known as rays. Required for normal migration of the hermaphrodite specific neurons (HSN) and for extension of some neuronal processes. Represses vulval fates in hypodermal cells that do not normally contribute to vulval development. This Caenorhabditis elegans protein is Polycomb group RING finger protein 3 homolog mig-32.